The sequence spans 816 residues: Neuroligin-4, X-linked (816 aa).

A signal peptide spans 1 to 41 (MSRPQGLLWLPLLFTPVCVMLNSNVLLWLTALAIKFTLIDS). Residues 42 to 676 (QAQYPVVNTN…TKRDYSTELS (635 aa)) are Extracellular-facing. N102 carries an N-linked (GlcNAc...) asparagine glycan. 2 cysteine pairs are disulfide-bonded: C110-C146 and C306-C317. The segment at 359 to 364 (QGEFLN) is interaction with NRXN1. Residues C476 and C510 are joined by a disulfide bond. N-linked (GlcNAc...) asparagine glycosylation occurs at N511. Residues 636-659 (TKRPAITPANNPKHSKDPHKTGPE) form a disordered region. Positions 649–658 (HSKDPHKTGP) are enriched in basic and acidic residues. Residues 677–697 (VTIAVGASLLFLNILAFAALY) form a helical membrane-spanning segment. Over 698 to 816 (YKKDKRRHET…LPHGHSTTRV (119 aa)) the chain is Cytoplasmic. A Phosphoserine modification is found at S712.

It belongs to the type-B carboxylesterase/lipase family. Homodimer. Interacts with NRXN1 in a calcium-dependent manner. Interaction with neurexins is mediated by heparan sulfate glycan modification on neurexin. Interacts through its C-terminus with DLG4/PSD-95 third PDZ domain. As to expression, expressed at highest levels in heart. Expressed at lower levels in liver, skeletal muscle and pancreas and at very low levels in brain.

The protein localises to the cell membrane. The protein resides in the postsynaptic density membrane. Cell surface protein involved in cell-cell-interactions via its interactions with neurexin family members. The protein is Neuroligin-4, X-linked (NLGN4X) of Homo sapiens (Human).